The sequence spans 218 residues: MADEVILLDFWPSPFGVRARIALREKGVEFEYREENLRDKSPLLLQMNPVHKKIPVLIHNGKPVCESMNVVQYIDEVWSDKNPILPSDPYQRAQARFWVDFVDTKLFEPADKIWQTKGEEQETAKKEYIEALKILETELGDKPYFGGDTFGFVDIAMTGYYSWFEASEKLANFSIEPECPTLMASAKRCLQRESVVQSLHDSEKILAFAYKIRKIYCV.

Alanine 2 is subject to N-acetylalanine. The GST N-terminal domain maps to 3 to 82 (DEVILLDFWP…YIDEVWSDKN (80 aa)). Glutathione-binding positions include 13 to 14 (SP), 39 to 40 (DK), 53 to 54 (KI), and 66 to 67 (ES). Residues 88–208 (DPYQRAQARF…LHDSEKILAF (121 aa)) form the GST C-terminal domain. A Phosphothreonine modification is found at threonine 149.

It belongs to the GST superfamily. Tau family.

The protein resides in the cytoplasm. It localises to the cytosol. It catalyses the reaction RX + glutathione = an S-substituted glutathione + a halide anion + H(+). Its function is as follows. May be involved in the conjugation of reduced glutathione to a wide number of exogenous and endogenous hydrophobic electrophiles and have a detoxification role against certain herbicides. The polypeptide is Glutathione S-transferase U22 (GSTU22) (Arabidopsis thaliana (Mouse-ear cress)).